A 917-amino-acid polypeptide reads, in one-letter code: Spermatogenesis-associated protein 31D4 (917 aa).

The helical transmembrane segment at 29–49 (FICLSGLGLFILYLFYMVLTL) threads the bilayer. Disordered stretches follow at residues 55 to 80 (EKNN…KDRK), 152 to 195 (SVSP…PPPL), and 773 to 798 (SQET…RSNS). The span at 63–74 (HQGRARRKRKSV) shows a compositional bias: basic residues. Positions 152–163 (SVSPLASSASGA) are enriched in low complexity. Residues 164–177 (ESSFTLASTPSATT) are compositionally biased toward polar residues. Residues 782–798 (LLHDPETSSDEDLRSNS) show a composition bias toward basic and acidic residues.

This sequence belongs to the SPATA31 family.

It is found in the membrane. Functionally, may play a role in spermatogenesis. The sequence is that of Spermatogenesis-associated protein 31D4 (SPATA31D4) from Homo sapiens (Human).